The sequence spans 385 residues: D-alanine--D-alanine ligase (385 aa).

The ATP-grasp domain occupies 165–375 (KRVFTSFGLK…YPELVDRLVE (211 aa)). ATP is bound at residue 201–256 (AGEHGWPLFVKPARAGSSIGITKVDDLAGLDEAVAEAQRHDPKIIVEALLRGREIE). Mg(2+)-binding residues include D329, E342, and N344.

It belongs to the D-alanine--D-alanine ligase family. Mg(2+) serves as cofactor. The cofactor is Mn(2+).

It is found in the cytoplasm. It catalyses the reaction 2 D-alanine + ATP = D-alanyl-D-alanine + ADP + phosphate + H(+). The protein operates within cell wall biogenesis; peptidoglycan biosynthesis. In terms of biological role, cell wall formation. The sequence is that of D-alanine--D-alanine ligase from Streptomyces avermitilis (strain ATCC 31267 / DSM 46492 / JCM 5070 / NBRC 14893 / NCIMB 12804 / NRRL 8165 / MA-4680).